The chain runs to 444 residues: Guanosine nucleotide diphosphate dissociation inhibitor 2 (444 aa).

Belongs to the Rab GDI family. In terms of tissue distribution, expressed in roots and floral buds.

In terms of biological role, regulates the GDP/GTP exchange reaction of most RAB proteins by inhibiting the dissociation of GDP from them, and the subsequent binding of GTP. This is Guanosine nucleotide diphosphate dissociation inhibitor 2 (GDI2) from Arabidopsis thaliana (Mouse-ear cress).